The following is a 313-amino-acid chain: tRNA pseudouridine synthase B (313 aa).

Residue His44 coordinates substrate. Catalysis depends on Asp49, which acts as the Nucleophile. Substrate is bound by residues Tyr77, Tyr180, and Leu201.

This sequence belongs to the pseudouridine synthase TruB family. Type 1 subfamily.

It carries out the reaction uridine(55) in tRNA = pseudouridine(55) in tRNA. Functionally, responsible for synthesis of pseudouridine from uracil-55 in the psi GC loop of transfer RNAs. The protein is tRNA pseudouridine synthase B of Hamiltonella defensa subsp. Acyrthosiphon pisum (strain 5AT).